A 920-amino-acid chain; its full sequence is Isoleucine--tRNA ligase (920 aa).

Residues 58–68 (PYANGHLHLGH) carry the 'HIGH' region motif. An L-isoleucyl-5'-AMP-binding site is contributed by Glu569. A 'KMSKS' region motif is present at residues 610–614 (KMSKS). Position 613 (Lys613) interacts with ATP. Cys895, Cys898, Cys910, and Cys913 together coordinate Zn(2+).

This sequence belongs to the class-I aminoacyl-tRNA synthetase family. IleS type 1 subfamily. Monomer. Zn(2+) serves as cofactor.

It localises to the cytoplasm. The enzyme catalyses tRNA(Ile) + L-isoleucine + ATP = L-isoleucyl-tRNA(Ile) + AMP + diphosphate. Functionally, catalyzes the attachment of isoleucine to tRNA(Ile). As IleRS can inadvertently accommodate and process structurally similar amino acids such as valine, to avoid such errors it has two additional distinct tRNA(Ile)-dependent editing activities. One activity is designated as 'pretransfer' editing and involves the hydrolysis of activated Val-AMP. The other activity is designated 'posttransfer' editing and involves deacylation of mischarged Val-tRNA(Ile). The polypeptide is Isoleucine--tRNA ligase (Helicobacter pylori (strain ATCC 700392 / 26695) (Campylobacter pylori)).